The sequence spans 640 residues: (Z)-beta-ocimene synthase TPS13PK, chloroplastic (640 aa).

A chloroplast-targeting transit peptide spans 1–95 (MAALVSTVSS…PFKDEAYVKR (95 aa)). The disordered stretch occupies residues 50 to 69 (MSTNNNNNNNQKNSSRRSAN). A compositionally biased stretch (polar residues) spans 60 to 69 (QKNSSRRSAN). (2E)-geranyl diphosphate-binding residues include R334, D371, D375, R515, and D518. Positions 371 and 375 each coordinate Mg(2+). The DDXXD motif motif lies at 371-375 (DDIYD). Residues D518, T522, and E526 each contribute to the Mg(2+) site.

This sequence belongs to the terpene synthase family. Monomer. Mg(2+) is required as a cofactor.

It is found in the plastid. The protein localises to the chloroplast. The catalysed reaction is (2E)-geranyl diphosphate = (Z)-beta-ocimene + diphosphate. It functions in the pathway secondary metabolite biosynthesis; terpenoid biosynthesis. Involved in monoterpene (C10) olefins biosynthesis, constituants of cannabinoids and terpenoids-rich resins. Catalyzes mainly the conversion of (2E)-geranyl diphosphate to (Z)-beta-ocimene. This Cannabis sativa (Hemp) protein is (Z)-beta-ocimene synthase TPS13PK, chloroplastic.